Here is a 616-residue protein sequence, read N- to C-terminus: Dihydroxy-acid dehydratase (616 aa).

Residue Asp81 coordinates Mg(2+). A [2Fe-2S] cluster-binding site is contributed by Cys122. 2 residues coordinate Mg(2+): Asp123 and Lys124. An N6-carboxylysine modification is found at Lys124. Position 195 (Cys195) interacts with [2Fe-2S] cluster. Glu491 is a Mg(2+) binding site. Residue Ser517 is the Proton acceptor of the active site.

Belongs to the IlvD/Edd family. Homodimer. [2Fe-2S] cluster serves as cofactor. It depends on Mg(2+) as a cofactor.

The enzyme catalyses (2R)-2,3-dihydroxy-3-methylbutanoate = 3-methyl-2-oxobutanoate + H2O. It catalyses the reaction (2R,3R)-2,3-dihydroxy-3-methylpentanoate = (S)-3-methyl-2-oxopentanoate + H2O. The protein operates within amino-acid biosynthesis; L-isoleucine biosynthesis; L-isoleucine from 2-oxobutanoate: step 3/4. It participates in amino-acid biosynthesis; L-valine biosynthesis; L-valine from pyruvate: step 3/4. Functionally, functions in the biosynthesis of branched-chain amino acids. Catalyzes the dehydration of (2R,3R)-2,3-dihydroxy-3-methylpentanoate (2,3-dihydroxy-3-methylvalerate) into 2-oxo-3-methylpentanoate (2-oxo-3-methylvalerate) and of (2R)-2,3-dihydroxy-3-methylbutanoate (2,3-dihydroxyisovalerate) into 2-oxo-3-methylbutanoate (2-oxoisovalerate), the penultimate precursor to L-isoleucine and L-valine, respectively. This is Dihydroxy-acid dehydratase from Yersinia pseudotuberculosis serotype O:3 (strain YPIII).